A 286-amino-acid polypeptide reads, in one-letter code: Bifunctional protein FolD (286 aa).

Residues 166–168 (GAS) and I232 each bind NADP(+).

The protein belongs to the tetrahydrofolate dehydrogenase/cyclohydrolase family. As to quaternary structure, homodimer.

The catalysed reaction is (6R)-5,10-methylene-5,6,7,8-tetrahydrofolate + NADP(+) = (6R)-5,10-methenyltetrahydrofolate + NADPH. It carries out the reaction (6R)-5,10-methenyltetrahydrofolate + H2O = (6R)-10-formyltetrahydrofolate + H(+). Its pathway is one-carbon metabolism; tetrahydrofolate interconversion. Catalyzes the oxidation of 5,10-methylenetetrahydrofolate to 5,10-methenyltetrahydrofolate and then the hydrolysis of 5,10-methenyltetrahydrofolate to 10-formyltetrahydrofolate. The sequence is that of Bifunctional protein FolD from Blochmanniella pennsylvanica (strain BPEN).